A 316-amino-acid polypeptide reads, in one-letter code: Pantothenate kinase (316 aa).

ATP is bound at residue 95–102; sequence GSVAVGKS.

It belongs to the prokaryotic pantothenate kinase family.

It is found in the cytoplasm. It catalyses the reaction (R)-pantothenate + ATP = (R)-4'-phosphopantothenate + ADP + H(+). Its pathway is cofactor biosynthesis; coenzyme A biosynthesis; CoA from (R)-pantothenate: step 1/5. The sequence is that of Pantothenate kinase from Shewanella pealeana (strain ATCC 700345 / ANG-SQ1).